A 218-amino-acid chain; its full sequence is 3,4-dihydroxy-2-butanone 4-phosphate synthase (218 aa).

D-ribulose 5-phosphate is bound by residues 38-39 (RE), Asp43, 151-155 (RRGHT), and Glu175. Glu39 contributes to the Mg(2+) binding site. His154 is a Mg(2+) binding site.

Belongs to the DHBP synthase family. Homodimer. Mg(2+) serves as cofactor. Requires Mn(2+) as cofactor.

It catalyses the reaction D-ribulose 5-phosphate = (2S)-2-hydroxy-3-oxobutyl phosphate + formate + H(+). It participates in cofactor biosynthesis; riboflavin biosynthesis; 2-hydroxy-3-oxobutyl phosphate from D-ribulose 5-phosphate: step 1/1. In terms of biological role, catalyzes the conversion of D-ribulose 5-phosphate to formate and 3,4-dihydroxy-2-butanone 4-phosphate. The polypeptide is 3,4-dihydroxy-2-butanone 4-phosphate synthase (Vibrio cholerae serotype O1 (strain M66-2)).